The primary structure comprises 429 residues: Phosphoribosylamine--glycine ligase (429 aa).

One can recognise an ATP-grasp domain in the interval 108-315 (KDFLARHRIP…LVLLVEAALA (208 aa)). ATP is bound at residue 134–195 (LHEQGAPIVI…EEFLDGEEAS (62 aa)). 2 residues coordinate Mg(2+): Glu-285 and Asn-287.

It belongs to the GARS family. The cofactor is Mg(2+). Mn(2+) is required as a cofactor.

The catalysed reaction is 5-phospho-beta-D-ribosylamine + glycine + ATP = N(1)-(5-phospho-beta-D-ribosyl)glycinamide + ADP + phosphate + H(+). Its pathway is purine metabolism; IMP biosynthesis via de novo pathway; N(1)-(5-phospho-D-ribosyl)glycinamide from 5-phospho-alpha-D-ribose 1-diphosphate: step 2/2. The sequence is that of Phosphoribosylamine--glycine ligase from Pseudomonas aeruginosa (strain ATCC 15692 / DSM 22644 / CIP 104116 / JCM 14847 / LMG 12228 / 1C / PRS 101 / PAO1).